The sequence spans 123 residues: Large ribosomal subunit protein uL29 (123 aa).

The protein belongs to the universal ribosomal protein uL29 family. As to quaternary structure, component of the large ribosomal subunit.

The protein resides in the cytoplasm. Component of the large ribosomal subunit. The ribosome is a large ribonucleoprotein complex responsible for the synthesis of proteins in the cell. The chain is Large ribosomal subunit protein uL29 (rpl35) from Xenopus tropicalis (Western clawed frog).